Reading from the N-terminus, the 220-residue chain is Adapter protein MecA (220 aa).

It belongs to the MecA family. In terms of assembly, homodimer.

Functionally, enables the recognition and targeting of unfolded and aggregated proteins to the ClpC protease or to other proteins involved in proteolysis. The protein is Adapter protein MecA of Macrococcus caseolyticus (strain JCSC5402) (Macrococcoides caseolyticum).